The chain runs to 377 residues: Cytochrome b (377 aa).

The next 4 helical transmembrane spans lie at 33–53, 77–98, 113–133, and 178–198; these read FGSL…FLAM, WLIR…YLHT, WTMG…GYVL, and FFMI…VHLL. Residues H83 and H97 each coordinate heme b. The heme b site is built by H182 and H196. H201 provides a ligand contact to a ubiquinone. Helical transmembrane passes span 226–246, 288–308, 320–340, and 347–367; these read YKDL…SLLS, LGGV…PLSS, FNQI…WIGA, and FIIM…LNPM.

It belongs to the cytochrome b family. The main subunits of complex b-c1 are: cytochrome b, cytochrome c1 and the Rieske protein. Heme b serves as cofactor.

It is found in the mitochondrion inner membrane. Component of the ubiquinol-cytochrome c reductase complex (complex III or cytochrome b-c1 complex) that is part of the mitochondrial respiratory chain. The b-c1 complex mediates electron transfer from ubiquinol to cytochrome c. Contributes to the generation of a proton gradient across the mitochondrial membrane that is then used for ATP synthesis. The sequence is that of Cytochrome b (MT-CYB) from Tetrodontophora bielanensis (Giant springtail).